Here is a 669-residue protein sequence, read N- to C-terminus: Acetyl-coenzyme A synthetase (669 aa).

Residues 211–214 and T329 contribute to the CoA site; that span reads RGGK. ATP is bound by residues 404–406, 428–433, D519, and R534; these read GEP and DTYWQT. S542 provides a ligand contact to CoA. R545 contacts ATP. Residue R602 participates in CoA binding.

The protein belongs to the ATP-dependent AMP-binding enzyme family.

The enzyme catalyses acetate + ATP + CoA = acetyl-CoA + AMP + diphosphate. The protein operates within ketone degradation; acetoin degradation. Its pathway is antibiotic biosynthesis; penicillin biosynthesis. The chain is Acetyl-coenzyme A synthetase (facA) from Penicillium chrysogenum (Penicillium notatum).